We begin with the raw amino-acid sequence, 94 residues long: Large ribosomal subunit protein uL23 (94 aa).

It belongs to the universal ribosomal protein uL23 family. In terms of assembly, part of the 50S ribosomal subunit. Contacts protein L29, and trigger factor when it is bound to the ribosome.

In terms of biological role, one of the early assembly proteins it binds 23S rRNA. One of the proteins that surrounds the polypeptide exit tunnel on the outside of the ribosome. Forms the main docking site for trigger factor binding to the ribosome. This is Large ribosomal subunit protein uL23 from Listeria monocytogenes serotype 4b (strain CLIP80459).